A 116-amino-acid polypeptide reads, in one-letter code: Nicotine metabolites export pump subunit NepA (116 aa).

4 helical membrane passes run 10-30 (LTIW…TSLL), 42-62 (TVAV…ILKF), 67-87 (IAYA…GVLF), and 92-112 (FSWK…TLNL).

It belongs to the drug/metabolite transporter (DMT) superfamily. Small multidrug resistance (SMR) (TC 2.A.7.1) family. NepA/NepB subfamily. The efflux pump is composed of NepA and NepB.

The protein resides in the cell membrane. Functionally, component of an efflux pump responsible for the transport of nicotine breakdown products, in particular methylamine, out of the cell. This pump apparently serves as a metabolic valve for nicotine catabolites and may protect the bacteria from the potentially toxic side effects of these compounds. The polypeptide is Nicotine metabolites export pump subunit NepA (nepA) (Paenarthrobacter nicotinovorans (Arthrobacter nicotinovorans)).